Consider the following 283-residue polypeptide: Protoheme IX farnesyltransferase (283 aa).

Helical transmembrane passes span 13–33, 35–55, 90–110, 156–176, 208–228, 230–250, and 262–282; these read ISSV…PTGL, GGTL…VGTL, ILLV…LTAV, LGAG…PHFL, MIGF…TEAA, WIYG…TIVF, and VLKA…VDWF.

This sequence belongs to the UbiA prenyltransferase family. Protoheme IX farnesyltransferase subfamily.

Its subcellular location is the cell inner membrane. The catalysed reaction is heme b + (2E,6E)-farnesyl diphosphate + H2O = Fe(II)-heme o + diphosphate. It participates in porphyrin-containing compound metabolism; heme O biosynthesis; heme O from protoheme: step 1/1. In terms of biological role, converts heme B (protoheme IX) to heme O by substitution of the vinyl group on carbon 2 of heme B porphyrin ring with a hydroxyethyl farnesyl side group. The chain is Protoheme IX farnesyltransferase from Salinibacter ruber (strain DSM 13855 / M31).